Here is a 150-residue protein sequence, read N- to C-terminus: D-aminoacyl-tRNA deacylase (150 aa).

The short motif at 136-137 (GP) is the Gly-cisPro motif, important for rejection of L-amino acids element.

Belongs to the DTD family. Homodimer.

The protein localises to the cytoplasm. The catalysed reaction is glycyl-tRNA(Ala) + H2O = tRNA(Ala) + glycine + H(+). It carries out the reaction a D-aminoacyl-tRNA + H2O = a tRNA + a D-alpha-amino acid + H(+). Functionally, an aminoacyl-tRNA editing enzyme that deacylates mischarged D-aminoacyl-tRNAs. Also deacylates mischarged glycyl-tRNA(Ala), protecting cells against glycine mischarging by AlaRS. Acts via tRNA-based rather than protein-based catalysis; rejects L-amino acids rather than detecting D-amino acids in the active site. By recycling D-aminoacyl-tRNA to D-amino acids and free tRNA molecules, this enzyme counteracts the toxicity associated with the formation of D-aminoacyl-tRNA entities in vivo and helps enforce protein L-homochirality. The protein is D-aminoacyl-tRNA deacylase of Staphylococcus aureus (strain bovine RF122 / ET3-1).